We begin with the raw amino-acid sequence, 279 residues long: Movement protein (279 aa).

Residues 247-279 are disordered; the sequence is ESEELNVESPPAAIGSSSASRSEAFRPQVVNGL. The span at 254-268 shows a compositional bias: low complexity; it reads ESPPAAIGSSSASRS.

Belongs to the cucumovirus movement protein family.

It is found in the host cell junction. It localises to the host plasmodesma. Transports viral genome to neighboring plant cells directly through plasmosdesmata, without any budding. The movement protein allows efficient cell to cell propagation, by bypassing the host cell wall barrier. Acts by forming a tubular structure at the host plasmodesmata, enlarging it enough to allow free passage of virion capsids. This chain is Movement protein, found in Cucumis sativus (Cucumber).